Reading from the N-terminus, the 274-residue chain is NADPH-dependent 7-cyano-7-deazaguanine reductase (274 aa).

80–82 provides a ligand contact to substrate; that stretch reads VES. 82–83 contributes to the NADPH binding site; that stretch reads SK. The active-site Thioimide intermediate is the cysteine 181. Residue aspartate 188 is the Proton donor of the active site. A substrate-binding site is contributed by 220–221; the sequence is HE. Residue 249 to 250 participates in NADPH binding; that stretch reads RG.

This sequence belongs to the GTP cyclohydrolase I family. QueF type 2 subfamily. Homodimer.

Its subcellular location is the cytoplasm. It carries out the reaction 7-aminomethyl-7-carbaguanine + 2 NADP(+) = 7-cyano-7-deazaguanine + 2 NADPH + 3 H(+). It participates in tRNA modification; tRNA-queuosine biosynthesis. In terms of biological role, catalyzes the NADPH-dependent reduction of 7-cyano-7-deazaguanine (preQ0) to 7-aminomethyl-7-deazaguanine (preQ1). The protein is NADPH-dependent 7-cyano-7-deazaguanine reductase of Burkholderia ambifaria (strain ATCC BAA-244 / DSM 16087 / CCUG 44356 / LMG 19182 / AMMD) (Burkholderia cepacia (strain AMMD)).